The sequence spans 357 residues: Membrane-bound lytic murein transglycosylase C (357 aa).

Residues 1–15 form the signal peptide; it reads MKKYLLLALLPFLYA. A lipid anchor (N-palmitoyl cysteine) is attached at Cys16. A lipid anchor (S-diacylglycerol cysteine) is attached at Cys16.

It belongs to the transglycosylase Slt family.

The protein localises to the cell outer membrane. It carries out the reaction Exolytic cleavage of the (1-&gt;4)-beta-glycosidic linkage between N-acetylmuramic acid (MurNAc) and N-acetylglucosamine (GlcNAc) residues in peptidoglycan, from either the reducing or the non-reducing ends of the peptidoglycan chains, with concomitant formation of a 1,6-anhydrobond in the MurNAc residue.. Functionally, murein-degrading enzyme. May play a role in recycling of muropeptides during cell elongation and/or cell division. This Haemophilus influenzae (strain PittGG) protein is Membrane-bound lytic murein transglycosylase C.